The primary structure comprises 419 residues: Serine hydroxymethyltransferase (419 aa).

Residues Leu-121 and Gly-125–Leu-127 contribute to the (6S)-5,6,7,8-tetrahydrofolate site. An N6-(pyridoxal phosphate)lysine modification is found at Lys-230. Ser-355 to Phe-357 provides a ligand contact to (6S)-5,6,7,8-tetrahydrofolate.

It belongs to the SHMT family. In terms of assembly, homodimer. Requires pyridoxal 5'-phosphate as cofactor.

Its subcellular location is the cytoplasm. It catalyses the reaction (6R)-5,10-methylene-5,6,7,8-tetrahydrofolate + glycine + H2O = (6S)-5,6,7,8-tetrahydrofolate + L-serine. It participates in one-carbon metabolism; tetrahydrofolate interconversion. Its pathway is amino-acid biosynthesis; glycine biosynthesis; glycine from L-serine: step 1/1. Catalyzes the reversible interconversion of serine and glycine with tetrahydrofolate (THF) serving as the one-carbon carrier. This reaction serves as the major source of one-carbon groups required for the biosynthesis of purines, thymidylate, methionine, and other important biomolecules. Also exhibits THF-independent aldolase activity toward beta-hydroxyamino acids, producing glycine and aldehydes, via a retro-aldol mechanism. The sequence is that of Serine hydroxymethyltransferase from Alkalilimnicola ehrlichii (strain ATCC BAA-1101 / DSM 17681 / MLHE-1).